The sequence spans 207 residues: 8-oxoguanine DNA glycosylase/AP lyase (207 aa).

Active-site residues include Lys-128 and Asp-146.

Belongs to the type-2 OGG1 family.

It catalyses the reaction 2'-deoxyribonucleotide-(2'-deoxyribose 5'-phosphate)-2'-deoxyribonucleotide-DNA = a 3'-end 2'-deoxyribonucleotide-(2,3-dehydro-2,3-deoxyribose 5'-phosphate)-DNA + a 5'-end 5'-phospho-2'-deoxyribonucleoside-DNA + H(+). Catalyzes the excision of an oxidatively damaged form of guanine (7,8-dihydro-8-oxoguanine = 8-oxoG) from DNA. Also cleaves the DNA backbone at apurinic/apyrimidinic sites (AP sites). This Saccharolobus islandicus (strain L.S.2.15 / Lassen #1) (Sulfolobus islandicus) protein is 8-oxoguanine DNA glycosylase/AP lyase.